A 156-amino-acid chain; its full sequence is ATP synthase subunit b (156 aa).

Residues 5–25 (LTMIGQAIAFFIFVVFCMKYV) traverse the membrane as a helical segment.

Belongs to the ATPase B chain family. In terms of assembly, F-type ATPases have 2 components, F(1) - the catalytic core - and F(0) - the membrane proton channel. F(1) has five subunits: alpha(3), beta(3), gamma(1), delta(1), epsilon(1). F(0) has three main subunits: a(1), b(2) and c(10-14). The alpha and beta chains form an alternating ring which encloses part of the gamma chain. F(1) is attached to F(0) by a central stalk formed by the gamma and epsilon chains, while a peripheral stalk is formed by the delta and b chains.

The protein localises to the cell inner membrane. In terms of biological role, f(1)F(0) ATP synthase produces ATP from ADP in the presence of a proton or sodium gradient. F-type ATPases consist of two structural domains, F(1) containing the extramembraneous catalytic core and F(0) containing the membrane proton channel, linked together by a central stalk and a peripheral stalk. During catalysis, ATP synthesis in the catalytic domain of F(1) is coupled via a rotary mechanism of the central stalk subunits to proton translocation. Its function is as follows. Component of the F(0) channel, it forms part of the peripheral stalk, linking F(1) to F(0). This chain is ATP synthase subunit b, found in Hahella chejuensis (strain KCTC 2396).